The sequence spans 701 residues: Lutropin-choriogonadotropic hormone receptor (701 aa).

A signal peptide spans 1-26 (MGRPSLALRLLLALLLLPPPAPLLWA). Residues 27-365 (LRPAPCPEPC…EDIMGYNFLR (339 aa)) lie on the Extracellular side of the membrane. N101 carries an N-linked (GlcNAc...) asparagine glycan. LRR repeat units lie at residues 124–149 (LPRLKYLSICNTGIHKLPDVTKIFSS), 151–173 (FNFILEICDNLHITTIPRNAFQG), 174–198 (MNNESITLKLYGNGFEEIQSHAFNG), 200–222 (TLISLELKENARLEKMHNDAFRG), 223–246 (ATGPSILDISSTKLQALPTYGLES), and 250–271 (LIATSSYSLKKLPSREKFTNLL). N176 and N197 each carry an N-linked (GlcNAc...) asparagine glycan. N-linked (GlcNAc...) asparagine glycans are attached at residues N293, N301, and N315. Y333 is modified (sulfotyrosine). A helical transmembrane segment spans residues 366 to 387 (VLIWLINILAITGNVTVLFVLL). Over 388–397 (TSRYKLTVPR) the chain is Cytoplasmic. Residues 398 to 418 (FLMCNLSFADFCMGLYLLLIA) form a helical membrane-spanning segment. Over 419–441 (SVDAQTKGQYYNHAIDWQTGSGC) the chain is Extracellular. A disulfide bridge links C441 with C516. The chain crosses the membrane as a helical span at residues 442–464 (SAAGFFTVFASELSVYTLTVITL). Residues 465–484 (ERWHTITYAIQLDQKLRLKH) are Cytoplasmic-facing. A helical transmembrane segment spans residues 485-507 (AIPVMLGGWLFSTLIAVLPLVGV). Residues 508–527 (SNYMKVSICLPMDVESTLSQ) are Extracellular-facing. The helical transmembrane segment at 528-551 (VYILTILILNVMAFIIICACYIKI) threads the bilayer. Residues 552 to 572 (YFAVQNPELMATNKDTKIAKK) lie on the Cytoplasmic side of the membrane. Residues 573 to 596 (MAVLIFTDFTCMAPISFFAISAAF) form a helical membrane-spanning segment. The Extracellular segment spans residues 597 to 607 (KVPLITVTNSK). The helical transmembrane segment at 608 to 629 (VLLVLFYPVNSCANPFLYAIFT) threads the bilayer. Residues 630–701 (KAFQRDFFLL…VLDKTCYKEC (72 aa)) lie on the Cytoplasmic side of the membrane. S-palmitoyl cysteine attachment occurs at residues C645 and C646.

Belongs to the G-protein coupled receptor 1 family. FSH/LSH/TSH subfamily. Post-translationally, sulfated.

The protein localises to the cell membrane. Its function is as follows. Receptor for lutropin-choriogonadotropic hormone. The activity of this receptor is mediated by G proteins which activate adenylate cyclase. This Bos taurus (Bovine) protein is Lutropin-choriogonadotropic hormone receptor (LHCGR).